Consider the following 379-residue polypeptide: Cytochrome b (379 aa).

The next 4 membrane-spanning stretches (helical) occupy residues 33 to 53 (FGSLLGVCLMIQILTGLFLAM), 77 to 98 (WLIRYLHANGASMFFICLFIHV), 113 to 133 (WNIGIILFLTTMATAFVGYVL), and 178 to 198 (FFAFHFILPFIITAFALVHLL). Residues histidine 83 and histidine 97 each contribute to the heme b site. Heme b-binding residues include histidine 182 and histidine 196. Histidine 201 is a binding site for a ubiquinone. Transmembrane regions (helical) follow at residues 226-246 (IKDLLGIFLLLLALMILALFF), 288-308 (LGGVLALILSILILAIFPLLN), 320-340 (ITQTIYWTFIANLLVLTWIGG), and 347-367 (FTTIGQIASITYFTXIIILMP).

It belongs to the cytochrome b family. The cytochrome bc1 complex contains 11 subunits: 3 respiratory subunits (MT-CYB, CYC1 and UQCRFS1), 2 core proteins (UQCRC1 and UQCRC2) and 6 low-molecular weight proteins (UQCRH/QCR6, UQCRB/QCR7, UQCRQ/QCR8, UQCR10/QCR9, UQCR11/QCR10 and a cleavage product of UQCRFS1). This cytochrome bc1 complex then forms a dimer. Requires heme b as cofactor.

The protein localises to the mitochondrion inner membrane. Its function is as follows. Component of the ubiquinol-cytochrome c reductase complex (complex III or cytochrome b-c1 complex) that is part of the mitochondrial respiratory chain. The b-c1 complex mediates electron transfer from ubiquinol to cytochrome c. Contributes to the generation of a proton gradient across the mitochondrial membrane that is then used for ATP synthesis. The sequence is that of Cytochrome b (MT-CYB) from Akodon affinis (Colombian grass mouse).